The following is a 275-amino-acid chain: Putative pyruvate, phosphate dikinase regulatory protein (275 aa).

151–158 (GVSRTSKT) contacts ADP.

This sequence belongs to the pyruvate, phosphate/water dikinase regulatory protein family. PDRP subfamily.

It carries out the reaction N(tele)-phospho-L-histidyl/L-threonyl-[pyruvate, phosphate dikinase] + ADP = N(tele)-phospho-L-histidyl/O-phospho-L-threonyl-[pyruvate, phosphate dikinase] + AMP + H(+). It catalyses the reaction N(tele)-phospho-L-histidyl/O-phospho-L-threonyl-[pyruvate, phosphate dikinase] + phosphate + H(+) = N(tele)-phospho-L-histidyl/L-threonyl-[pyruvate, phosphate dikinase] + diphosphate. In terms of biological role, bifunctional serine/threonine kinase and phosphorylase involved in the regulation of the pyruvate, phosphate dikinase (PPDK) by catalyzing its phosphorylation/dephosphorylation. The protein is Putative pyruvate, phosphate dikinase regulatory protein of Rhodospirillum rubrum (strain ATCC 11170 / ATH 1.1.1 / DSM 467 / LMG 4362 / NCIMB 8255 / S1).